Reading from the N-terminus, the 98-residue chain is Nuclear protein 2 (98 aa).

Residues 1–11 are compositionally biased toward low complexity; that stretch reads MEPAAPTVQPR. 2 disordered regions span residues 1–24 and 78–98; these read MEPAAPTVQPRAQPPPPDVWPPVG and LNSQRKRRQRQLQPRPRTRLT. Residues 81–98 are compositionally biased toward basic residues; the sequence is QRKRRQRQLQPRPRTRLT.

This sequence belongs to the NUPR family.

The protein localises to the nucleus. In terms of biological role, acts as a transcriptional repressor by inhibiting gene expression at the NUPR1 promoter in a p53/TP53-dependent manner in cancer cells. Involved in the G1 cell cycle arrest, and in a decrease in cell viability and cell proliferation. Plays a role as a negative regulator of the protumoral factor NUPR1. The protein is Nuclear protein 2 of Bos taurus (Bovine).